The following is a 122-amino-acid chain: Large ribosomal subunit protein uL14 (122 aa).

The protein belongs to the universal ribosomal protein uL14 family. Part of the 50S ribosomal subunit. Forms a cluster with proteins L3 and L19. In the 70S ribosome, L14 and L19 interact and together make contacts with the 16S rRNA in bridges B5 and B8.

Binds to 23S rRNA. Forms part of two intersubunit bridges in the 70S ribosome. The chain is Large ribosomal subunit protein uL14 from Thermobifida fusca (strain YX).